The following is an 85-amino-acid chain: Small ribosomal subunit protein uS17 (85 aa).

The protein belongs to the universal ribosomal protein uS17 family. In terms of assembly, part of the 30S ribosomal subunit.

Its function is as follows. One of the primary rRNA binding proteins, it binds specifically to the 5'-end of 16S ribosomal RNA. The polypeptide is Small ribosomal subunit protein uS17 (Mycoplasma pneumoniae (strain ATCC 29342 / M129 / Subtype 1) (Mycoplasmoides pneumoniae)).